A 116-amino-acid polypeptide reads, in one-letter code: MINIYDSANKLAEDLTQTDQYKALADAVKVVQEDAESAALFKKMDELQTKIMQSQQTGQPLSEEDQQAYKDLNDQVQNNKQIVSLLQTEQSLYELLNDIQKTYSKPINDLYEDLRK.

Belongs to the UPF0342 family.

The sequence is that of UPF0342 protein LBA1592 from Lactobacillus acidophilus (strain ATCC 700396 / NCK56 / N2 / NCFM).